The sequence spans 498 residues: Guanosine-5'-triphosphate,3'-diphosphate pyrophosphatase (498 aa).

This sequence belongs to the GppA/Ppx family. GppA subfamily.

It carries out the reaction guanosine 3'-diphosphate 5'-triphosphate + H2O = guanosine 3',5'-bis(diphosphate) + phosphate + H(+). The protein operates within purine metabolism; ppGpp biosynthesis; ppGpp from GTP: step 2/2. Its function is as follows. Catalyzes the conversion of pppGpp to ppGpp. Guanosine pentaphosphate (pppGpp) is a cytoplasmic signaling molecule which together with ppGpp controls the 'stringent response', an adaptive process that allows bacteria to respond to amino acid starvation, resulting in the coordinated regulation of numerous cellular activities. The polypeptide is Guanosine-5'-triphosphate,3'-diphosphate pyrophosphatase (Yersinia pseudotuberculosis serotype O:1b (strain IP 31758)).